Consider the following 258-residue polypeptide: Imidazole glycerol phosphate synthase subunit HisF (258 aa).

Residues aspartate 11 and aspartate 130 contribute to the active site.

Belongs to the HisA/HisF family. In terms of assembly, heterodimer of HisH and HisF.

It localises to the cytoplasm. It catalyses the reaction 5-[(5-phospho-1-deoxy-D-ribulos-1-ylimino)methylamino]-1-(5-phospho-beta-D-ribosyl)imidazole-4-carboxamide + L-glutamine = D-erythro-1-(imidazol-4-yl)glycerol 3-phosphate + 5-amino-1-(5-phospho-beta-D-ribosyl)imidazole-4-carboxamide + L-glutamate + H(+). Its pathway is amino-acid biosynthesis; L-histidine biosynthesis; L-histidine from 5-phospho-alpha-D-ribose 1-diphosphate: step 5/9. Its function is as follows. IGPS catalyzes the conversion of PRFAR and glutamine to IGP, AICAR and glutamate. The HisF subunit catalyzes the cyclization activity that produces IGP and AICAR from PRFAR using the ammonia provided by the HisH subunit. This Salmonella agona (strain SL483) protein is Imidazole glycerol phosphate synthase subunit HisF.